A 366-amino-acid polypeptide reads, in one-letter code: UDP-N-acetylglucosamine--N-acetylmuramyl-(pentapeptide) pyrophosphoryl-undecaprenol N-acetylglucosamine transferase (366 aa).

Residues 10-12 (TGG), asparagine 124, arginine 165, serine 192, isoleucine 247, and glutamine 292 each bind UDP-N-acetyl-alpha-D-glucosamine.

Belongs to the glycosyltransferase 28 family. MurG subfamily.

It is found in the cell inner membrane. The catalysed reaction is di-trans,octa-cis-undecaprenyl diphospho-N-acetyl-alpha-D-muramoyl-L-alanyl-D-glutamyl-meso-2,6-diaminopimeloyl-D-alanyl-D-alanine + UDP-N-acetyl-alpha-D-glucosamine = di-trans,octa-cis-undecaprenyl diphospho-[N-acetyl-alpha-D-glucosaminyl-(1-&gt;4)]-N-acetyl-alpha-D-muramoyl-L-alanyl-D-glutamyl-meso-2,6-diaminopimeloyl-D-alanyl-D-alanine + UDP + H(+). It functions in the pathway cell wall biogenesis; peptidoglycan biosynthesis. Functionally, cell wall formation. Catalyzes the transfer of a GlcNAc subunit on undecaprenyl-pyrophosphoryl-MurNAc-pentapeptide (lipid intermediate I) to form undecaprenyl-pyrophosphoryl-MurNAc-(pentapeptide)GlcNAc (lipid intermediate II). This is UDP-N-acetylglucosamine--N-acetylmuramyl-(pentapeptide) pyrophosphoryl-undecaprenol N-acetylglucosamine transferase from Geotalea daltonii (strain DSM 22248 / JCM 15807 / FRC-32) (Geobacter daltonii).